The sequence spans 293 residues: 33 kDa chaperonin (293 aa).

2 cysteine pairs are disulfide-bonded: Cys-231-Cys-233 and Cys-264-Cys-267.

Belongs to the HSP33 family. In terms of processing, under oxidizing conditions two disulfide bonds are formed involving the reactive cysteines. Under reducing conditions zinc is bound to the reactive cysteines and the protein is inactive.

Its subcellular location is the cytoplasm. In terms of biological role, redox regulated molecular chaperone. Protects both thermally unfolding and oxidatively damaged proteins from irreversible aggregation. Plays an important role in the bacterial defense system toward oxidative stress. The chain is 33 kDa chaperonin from Yersinia pseudotuberculosis serotype O:1b (strain IP 31758).